Here is a 146-residue protein sequence, read N- to C-terminus: MKNEMHLEFSALSQNESFARVTVASFIAQLDPTMDELTEIKTVVSEAVTNAIIHGYEENCDGKVYISVTLEDHVVYLTIRDEGIGITDLEEARQPLFTTKPELERSGMGFTIMENFMDDVTIDSSPEMGTTIRLTKHLSKSKALCN.

Belongs to the anti-sigma-factor family.

The enzyme catalyses L-seryl-[protein] + ATP = O-phospho-L-seryl-[protein] + ADP + H(+). The catalysed reaction is L-threonyl-[protein] + ATP = O-phospho-L-threonyl-[protein] + ADP + H(+). Binds to sigma F and blocks its ability to form an RNA polymerase holoenzyme (E-sigma F). Phosphorylates SpoIIAA on a serine residue. This phosphorylation may enable SpoIIAA to act as an anti-anti-sigma factor that counteracts SpoIIAB and thus releases sigma F from inhibition. This chain is Anti-sigma F factor, found in Bacillus velezensis (strain DSM 23117 / BGSC 10A6 / LMG 26770 / FZB42) (Bacillus amyloliquefaciens subsp. plantarum).